A 419-amino-acid polypeptide reads, in one-letter code: Heparan-sulfate 6-O-sulfotransferase 3-B (419 aa).

Residues 1–7 (MNDKPNK) are Cytoplasmic-facing. Residues 8 to 28 (WIFIPILAILFVMIGYQYVCP) traverse the membrane as a helical; Signal-anchor for type II membrane protein segment. Topologically, residues 29 to 419 (AGGQACHFRT…EDYASQVVRW (391 aa)) are lumenal. A glycan (N-linked (GlcNAc...) asparagine) is linked at N77. 101-109 (HIQKTGGTT) is a 3'-phosphoadenylyl sulfate binding site. Substrate contacts are provided by residues 131 to 132 (KK), R148, W153, and H158. Catalysis depends on H158, which acts as the Proton acceptor. 3'-phosphoadenylyl sulfate is bound by residues R191 and S199. Residues H203 and W210 each contribute to the substrate site. N-linked (GlcNAc...) asparagine glycans are attached at residues N270 and N275. 323–325 (TQI) lines the 3'-phosphoadenylyl sulfate pocket. N-linked (GlcNAc...) asparagine glycosylation occurs at N326. 329–330 (RA) contributes to the 3'-phosphoadenylyl sulfate binding site. N393 and N402 each carry an N-linked (GlcNAc...) asparagine glycan.

The protein belongs to the sulfotransferase 6 family. In early somitogenesis, expressed in presumptive forebrain and midbrain, tail bud and Kupffer's vesicle. During mid-somitogenesis, ubiquitous expression which is strongest in the somites and eye. During late somitogenesis, predominantly expressed in eye, hindbrain and ventral somites. At 24 hours post-fertilization (hpf), restricted to lens and neural retina, brain, otic vesicle and somites. At 36 hpf, brain expression is restricted to telencephalon. At 48 hpf, restricted to telencephalon and pectoral fin.

It localises to the membrane. It carries out the reaction alpha-D-glucosaminyl-[heparan sulfate](n) + 3'-phosphoadenylyl sulfate = 6-sulfo-alpha-D-glucosaminyl-[heparan sulfate](n) + adenosine 3',5'-bisphosphate + H(+). 6-O-sulfation enzyme which catalyzes the transfer of sulfate from 3'-phosphoadenosine 5'-phosphosulfate (PAPS) to position 6 of the N-sulfoglucosamine residue (GlcNS) of heparan sulfate. The polypeptide is Heparan-sulfate 6-O-sulfotransferase 3-B (Danio rerio (Zebrafish)).